The sequence spans 423 residues: MELGLALRLVAPPPRLPCRALQPPPMPCFSPCAARRSRIRSSRLERRVGVVVSGGSMASLAMEEEEEEEWEEAEEEAEGWQEEEAAVVTTRPRLELIEKPDRSLCLLDEYESEELGTSHCANHRSGYVAVLGKPNVGKSTLINQIVGQKLSIVTDKPQTTRHRILGICSEPEYQIILYDTPGVIKKEMHKLDTMMMKNVRSAVGSADCVLVVVDACKMPEKIDEILEEGVGNKDTELPVLLVLNKKDLIKPGEIAKKLEWYQKFTNADDVIPISAKFGHGVDDIKEWILSKLPLGPAYYPKDIASEHPERFFVGEIVREKIFLQYRQEIPYACQVNVISYKSRPTAKDFIQVEILVEKESQRSIILGKDGKAIKMLATASRLDIEDFLQKKVYLEIMVKVKENWRQDELLLKRYGYGGEIQAL.

Residues 1–60 (MELGLALRLVAPPPRLPCRALQPPPMPCFSPCAARRSRIRSSRLERRVGVVVSGGSMASL) constitute a chloroplast transit peptide. The region spanning 124 to 294 (RSGYVAVLGK…KEWILSKLPL (171 aa)) is the Era-type G domain. Residues 132 to 139 (GKPNVGKS) form a G1 region. 132 to 139 (GKPNVGKS) lines the GTP pocket. The segment at 158–162 (QTTRH) is G2. Residues 179 to 182 (DTPG) are G3. GTP-binding positions include 179 to 183 (DTPGV) and 244 to 247 (NKKD). The interval 244 to 247 (NKKD) is G4. The segment at 273 to 275 (ISA) is G5. The KH type-2 domain maps to 325-402 (YRQEIPYACQ…YLEIMVKVKE (78 aa)).

It belongs to the TRAFAC class TrmE-Era-EngA-EngB-Septin-like GTPase superfamily. Era GTPase family.

The protein resides in the plastid. It is found in the chloroplast stroma. It localises to the chloroplast nucleoid. Functionally, nuclear genome-encoded probable GTPase involved in ribosome biogenesis in chloroplasts. Plays a role in 16S rRNA maturation in plastids and may contribute to the assembly of the small (30S) ribosomal subunit. The polypeptide is GTPase ERA-like, chloroplastic (Oryza sativa subsp. japonica (Rice)).